Consider the following 200-residue polypeptide: High mobility group protein 1 homolog (200 aa).

2 consecutive DNA-binding regions (HMG box) follow at residues 11–81 (PRGR…QSYK) and 100–168 (PKRN…AEYK). The segment covering 64–86 (EKSMRDKVRYDREMQSYKPPKGE) has biased composition (basic and acidic residues). Disordered stretches follow at residues 64–103 (EKSM…PKRN) and 169–200 (AKAK…DDSD). Over residues 190-200 (SSDDSSSDDSD) the composition is skewed to acidic residues.

This sequence belongs to the HMGB family.

Its subcellular location is the nucleus. The protein localises to the chromosome. Its function is as follows. Binds preferentially single-stranded DNA and unwinds double-stranded DNA. This is High mobility group protein 1 homolog (HMG1) from Strongylocentrotus purpuratus (Purple sea urchin).